We begin with the raw amino-acid sequence, 1462 residues long: NK-tumor recognition protein (1462 aa).

Residues 10–175 (HFDIEINREP…ADVRVIDCGV (166 aa)) enclose the PPIase cyclophilin-type domain. Disordered stretches follow at residues 187–591 (KKRK…TMAQ) and 607–627 (VIPLSDSPPPSRWKPGQKPWK). Positions 198–213 (SDSSSNSSSSSESSSE) are enriched in low complexity. Positions 221-240 (SRRRKHKRRPKVKRSKKRRK) are enriched in basic residues. Composition is skewed to basic and acidic residues over residues 241-250 (EASSSEEPRN) and 258-286 (GHSERSDTNEKRSVDSSAKREKPVVRPEE). Lys323 participates in a covalent cross-link: Glycyl lysine isopeptide (Lys-Gly) (interchain with G-Cter in SUMO2). Residues 329-345 (SGRKIKGRGTIRYHTPP) show a composition bias toward basic residues. Residues Ser379, Ser401, and Ser416 each carry the phosphoserine modification. Residues 382 to 402 (KWSKGDKLSDPCSSRWDERSL) are compositionally biased toward basic and acidic residues. Polar residues predominate over residues 403–421 (SQRSRSWSYNGYYSDLSTA). Positions 423–459 (HSGHHKKRRKEKKVKHKKKGKKQKHCRRHKQTKKRRI) are enriched in basic residues. A phosphoserine mark is found at Ser463 and Ser471. A compositionally biased stretch (basic and acidic residues) spans 497 to 507 (KRDWSKSDKDV). Over residues 524–542 (HSQSYSRGSSRSRTASKSS) the composition is skewed to low complexity. Basic residues predominate over residues 543–568 (SHSRSRSKSRSSSKSGHRKRASKSPR). Residues Lys578 and Lys581 each participate in a glycyl lysine isopeptide (Lys-Gly) (interchain with G-Cter in SUMO2) cross-link. Ser613 bears the Phosphoserine mark. Lys639 participates in a covalent cross-link: Glycyl lysine isopeptide (Lys-Gly) (interchain with G-Cter in SUMO2). A Phosphoserine modification is found at Ser648. Residues Lys656 and Lys666 each participate in a glycyl lysine isopeptide (Lys-Gly) (interchain with G-Cter in SUMO2) cross-link. A disordered region spans residues 658-1072 (TGSSSSYHKR…EEDLSGKHDT (415 aa)). 2 stretches are compositionally biased toward low complexity: residues 699–725 (SRSYSRSYTRSRSLASSHSRSRSPSSR) and 736–749 (SQCSRSSSYTSISS). The span at 754 to 774 (RAKRRLRSSGKKNSVSHKKHS) shows a compositional bias: basic residues. Basic and acidic residues predominate over residues 775–800 (SSSEKTLHSKYVKGRDRSSCVRKYSE). Residues 801–815 (SRSSLDYSSDSEQSS) are compositionally biased toward low complexity. 2 stretches are compositionally biased toward basic and acidic residues: residues 823–870 (QEKE…DHLR) and 885–909 (WDSESNSERDVTKNSKNDSHPSSDK). Phosphoserine occurs at positions 866, 887, 889, 891, and 907. A compositionally biased stretch (acidic residues) spans 910-922 (EEGEATSDSESEV). The span at 932 to 969 (TTKSSTNTSLPDDNGAWKSSKQRTSTSDSEGSCSNSEN) shows a compositional bias: polar residues. Residues 988–1013 (EHTKKVKEKLKGKKDKKHKAPKRKQA) show a composition bias toward basic residues. The span at 1022–1031 (FGEEEEEEID) shows a compositional bias: acidic residues. A compositionally biased stretch (basic and acidic residues) spans 1032-1072 (DKQVTQESKEKKVSENNETIKDNILKTEKSSEEDLSGKHDT). A Glycyl lysine isopeptide (Lys-Gly) (interchain with G-Cter in SUMO2) cross-link involves residue Lys1057. Phosphoserine is present on residues Ser1077 and Ser1146. The tract at residues 1129-1156 (MEICTPDRSSPAKVEETSPLGNARLDTP) is disordered. Thr1155 is modified (phosphothreonine). A Glycyl lysine isopeptide (Lys-Gly) (interchain with G-Cter in SUMO2) cross-link involves residue Lys1163. Residues 1169-1215 (EHPQAEVVKQESSMSESKVLGEVGKQDSSSASLASAGESTGKKEVAE) form a disordered region. Lys1177 is covalently cross-linked (Glycyl lysine isopeptide (Lys-Gly) (interchain with G-Cter in SUMO1); alternate). A Glycyl lysine isopeptide (Lys-Gly) (interchain with G-Cter in SUMO2); alternate cross-link involves residue Lys1177. Ser1203 carries the phosphoserine modification. Residues Lys1216, Lys1225, and Lys1258 each participate in a glycyl lysine isopeptide (Lys-Gly) (interchain with G-Cter in SUMO2) cross-link. A disordered region spans residues 1251–1462 (LTTVPEMKPQ…RSPSESSRYS (212 aa)). An arg/Ser tandem repeat-rich region spans residues 1311–1348 (SRSPSRSRSKSETKSRHRTRSVSYSHSRSRSRSSTSSY). 2 stretches are compositionally biased toward low complexity: residues 1331 to 1351 (SVSYSHSRSRSRSSTSSYRSR) and 1359 to 1376 (RGWYSRGRTRSRSSSYRS). A compositionally biased stretch (basic residues) spans 1377–1388 (YKSHRTSSRSRS). Residues 1389–1410 (RSSSYDPHSRSRSYTYDSYYSR) are compositionally biased toward low complexity. Residues 1425–1435 (RGRSYNRRSRS) are compositionally biased toward basic residues.

It is found in the cell membrane. It catalyses the reaction [protein]-peptidylproline (omega=180) = [protein]-peptidylproline (omega=0). Its activity is regulated as follows. Inhibited by cyclosporin A (CsA). Its function is as follows. PPIase that catalyzes the cis-trans isomerization of proline imidic peptide bonds in oligopeptides and may therefore assist protein folding. Component of a putative tumor-recognition complex involved in the function of NK cells. The sequence is that of NK-tumor recognition protein from Homo sapiens (Human).